A 366-amino-acid chain; its full sequence is 5-formaminoimidazole-4-carboxamide-1-(beta)-D-ribofuranosyl 5'-monophosphate synthetase (366 aa).

5-amino-1-(5-phospho-beta-D-ribosyl)imidazole-4-carboxamide is bound by residues His-27 and Ser-96. Positions 131–357 (RKWLEDAGVP…IAREIKEAVK (227 aa)) constitute an ATP-grasp domain. Residues 154–208 (PVIV…VRFY) and Glu-239 contribute to the ATP site. Asn-263 provides a ligand contact to 5-amino-1-(5-phospho-beta-D-ribosyl)imidazole-4-carboxamide. Positions 302 and 315 each coordinate Mg(2+).

It belongs to the phosphohexose mutase family. Requires Mg(2+) as cofactor. The cofactor is Mn(2+).

The catalysed reaction is 5-amino-1-(5-phospho-beta-D-ribosyl)imidazole-4-carboxamide + formate + ATP = 5-formamido-1-(5-phospho-D-ribosyl)imidazole-4-carboxamide + ADP + phosphate. Its pathway is purine metabolism; IMP biosynthesis via de novo pathway; 5-formamido-1-(5-phospho-D-ribosyl)imidazole-4-carboxamide from 5-amino-1-(5-phospho-D-ribosyl)imidazole-4-carboxamide (formate route): step 1/1. In terms of biological role, catalyzes the ATP- and formate-dependent formylation of 5-aminoimidazole-4-carboxamide-1-beta-d-ribofuranosyl 5'-monophosphate (AICAR) to 5-formaminoimidazole-4-carboxamide-1-beta-d-ribofuranosyl 5'-monophosphate (FAICAR) in the absence of folates. In Korarchaeum cryptofilum (strain OPF8), this protein is 5-formaminoimidazole-4-carboxamide-1-(beta)-D-ribofuranosyl 5'-monophosphate synthetase.